A 480-amino-acid polypeptide reads, in one-letter code: Cysteine--tRNA ligase (480 aa).

Position 29 (Cys29) interacts with Zn(2+). A 'HIGH' region motif is present at residues 31–41; the sequence is PTVYADPHLGH. Positions 220, 245, and 249 each coordinate Zn(2+). The 'KMSKS' region motif lies at 276–280; the sequence is KMAKS. Lys279 provides a ligand contact to ATP.

Belongs to the class-I aminoacyl-tRNA synthetase family. In terms of assembly, monomer. It depends on Zn(2+) as a cofactor.

It localises to the cytoplasm. It catalyses the reaction tRNA(Cys) + L-cysteine + ATP = L-cysteinyl-tRNA(Cys) + AMP + diphosphate. The chain is Cysteine--tRNA ligase from Thermus thermophilus (strain ATCC 27634 / DSM 579 / HB8).